Here is a 466-residue protein sequence, read N- to C-terminus: Argininosuccinate lyase (466 aa).

It belongs to the lyase 1 family. Argininosuccinate lyase subfamily.

The protein localises to the cytoplasm. The enzyme catalyses 2-(N(omega)-L-arginino)succinate = fumarate + L-arginine. The protein operates within amino-acid biosynthesis; L-arginine biosynthesis; L-arginine from L-ornithine and carbamoyl phosphate: step 3/3. This chain is Argininosuccinate lyase, found in Syntrophobacter fumaroxidans (strain DSM 10017 / MPOB).